Reading from the N-terminus, the 419-residue chain is MIIKNGMIIYGDEFTIVRSDVLIEDGVIKEVGKNIRAPADMVIDASSHLVIPGLINAHTHVSMVLLRGLAEDVPLQEWLQNYIWPRERELKRKDIYWGTLLGLVEMARSGVTTFVDMYFHIEEVAKATIEVGLRGFLGYGMVDLENREKLEVEIKETEKFYEYVTKINSPLVNFVLAPHAPYTCSLECLKWVSKKANQWNVPVTIHLSETKKEVEEIRKKYGMTPTQLLDEVGLLNEKLIAAHGVWLSEEELRMLSSANATVVHCPASNMKLGSGVFPLRKALDLGVNVALGTDGAASNNTLDMLREMRLASLLQKVAHLNPAIVKSEEILKMATVNPAKALGLKSGVIKEGYIADLALINLRRPHLLPLNSPTSLLIYSARGGDVDTLFVNGEIVILDGEFLTVNEEKILDKFLKVIE.

Positions 58 and 60 each coordinate Zn(2+). The substrate site is built by E87 and H179. H206 serves as a coordination point for Zn(2+). E209 and D294 together coordinate substrate. D294 contributes to the Zn(2+) binding site.

It belongs to the metallo-dependent hydrolases superfamily. MTA/SAH deaminase family. Zn(2+) serves as cofactor.

It carries out the reaction S-adenosyl-L-homocysteine + H2O + H(+) = S-inosyl-L-homocysteine + NH4(+). The catalysed reaction is S-methyl-5'-thioadenosine + H2O + H(+) = S-methyl-5'-thioinosine + NH4(+). Catalyzes the deamination of 5-methylthioadenosine and S-adenosyl-L-homocysteine into 5-methylthioinosine and S-inosyl-L-homocysteine, respectively. Is also able to deaminate adenosine. In Pyrococcus furiosus (strain ATCC 43587 / DSM 3638 / JCM 8422 / Vc1), this protein is 5-methylthioadenosine/S-adenosylhomocysteine deaminase.